We begin with the raw amino-acid sequence, 137 residues long: NADH-quinone oxidoreductase subunit A (137 aa).

A run of 3 helical transmembrane segments spans residues 12-32, 66-86, and 95-115; these read WGFA…LGLS, FYLV…LFAW, and WTGF…LVYL.

This sequence belongs to the complex I subunit 3 family. As to quaternary structure, NDH-1 is composed of 13 different subunits. Subunits NuoA, H, J, K, L, M, N constitute the membrane sector of the complex.

Its subcellular location is the cell inner membrane. The catalysed reaction is a quinone + NADH + 5 H(+)(in) = a quinol + NAD(+) + 4 H(+)(out). In terms of biological role, NDH-1 shuttles electrons from NADH, via FMN and iron-sulfur (Fe-S) centers, to quinones in the respiratory chain. The immediate electron acceptor for the enzyme in this species is believed to be ubiquinone. Couples the redox reaction to proton translocation (for every two electrons transferred, four hydrogen ions are translocated across the cytoplasmic membrane), and thus conserves the redox energy in a proton gradient. This Pseudomonas putida (strain ATCC 700007 / DSM 6899 / JCM 31910 / BCRC 17059 / LMG 24140 / F1) protein is NADH-quinone oxidoreductase subunit A.